A 930-amino-acid polypeptide reads, in one-letter code: MITGLLKKVFGSRNERLIKQYRRTVEQINALEPKFEKLSDDELRGMTETFRQRHAGGESLEALLPEAFAVCREASKRIMKMRHFDVQMIGGMVLNDNKIAEMRTGEGKTLTATLAVYLNALTGKGVHVVTVNDYLAQRDAEWMGRLYNFLGLSVGVNLSQMPHDQKQIAYNADITYGTNNEFGFDYLRDNMVYDPSQRVQRPLHYAIVDEVDSILIDEARTPLIISGQAENQTDLYQRMNGIPKLLERQIGEEKADGTGVEKPGDYYVDEKGHQVYLTEAGHEKAEQILSQLGLISEGESLYAPQNITLMHHLYAALRAHSLFHRDQHYVVQNDEVIIVDEFTGRLMTGRRWSDGLHQAVEAKEGVTVQQENQTLATITFQNYFRMYEKLAGMTGTADTEAYEFQEIYGLEVVVIPTNRQAQRKDLQDQIYKTSKERYDAVVRDIRDCYDRGQPVLVGTTSIETSEYLSDLLNKEKLPHQVLNAKQHAREAEIVAQAGRPKMVTIATNMAGRGTDIVLGGNVEKQAGFIEADANLSDAEKAERIAKLKDEWQSLHDQVKAAGGLHIVGTERHESRRIDNQLRGRAGRQGDPGSSRFYLSLDDQLLRIFAGDRVRAIMERLKMPEGEPIEAGIVTRSIESAQRKVEGRNFDIRKQLLQYDDVANDQRKEIYKLRNDVLESQDVGDMVANLRESVLVEVFREYVPAESMEEQWDIAGLEQRLRDDWGLELPLAKTIEGAQSIEDEELLDMILKAAREHYDAKVAQVGRESFAGFERSVMLQSIDTHWREHLAALDHLRQGIHLRGYAQKDPKQEYKRESFELFARLLDVIKSEVTRVVFNVHIQSPEELEQASEQIEEGLAHLENVQYKHDEFAEGAEPVEQAEPARSNTAAAALAAMGGEAALAGMPKVGRNDPCPCGSGKKFKQCHGKLS.

ATP contacts are provided by residues Gln-87, 105 to 109, and Asp-515; that span reads GEGKT. Zn(2+)-binding residues include Cys-914, Cys-916, Cys-925, and His-926.

This sequence belongs to the SecA family. Monomer and homodimer. Part of the essential Sec protein translocation apparatus which comprises SecA, SecYEG and auxiliary proteins SecDF-YajC and YidC. The cofactor is Zn(2+).

The protein resides in the cell inner membrane. It is found in the cytoplasm. The enzyme catalyses ATP + H2O + cellular proteinSide 1 = ADP + phosphate + cellular proteinSide 2.. Its function is as follows. Part of the Sec protein translocase complex. Interacts with the SecYEG preprotein conducting channel. Has a central role in coupling the hydrolysis of ATP to the transfer of proteins into and across the cell membrane, serving both as a receptor for the preprotein-SecB complex and as an ATP-driven molecular motor driving the stepwise translocation of polypeptide chains across the membrane. This is Protein translocase subunit SecA from Cupriavidus metallidurans (strain ATCC 43123 / DSM 2839 / NBRC 102507 / CH34) (Ralstonia metallidurans).